Consider the following 37-residue polypeptide: Large ribosomal subunit protein bL36c (37 aa).

This sequence belongs to the bacterial ribosomal protein bL36 family.

It localises to the plastid. It is found in the organellar chromatophore. The protein is Large ribosomal subunit protein bL36c of Paulinella chromatophora.